The following is a 660-amino-acid chain: MKAVIFAYHDMGCQGVQAVLDAGYEIAAIFTHADNPAENTFFGSVSRLAAGLGIPVYAPDNVNHPIWVDRIAELAPDIIFSFYYRNLLSEEILHLAPAGAFNLHGSLLPAYRGRAPLNWVLVNGESETGVTLHRMVKRADAGEIVASQRVAIAQDDVALTLHHKLCQAARQLLNSILPTMKCGNIPSVPQRESDATYYGRRRPEDGLIDWHKPVSTVHNLVRAVAAPWPGAFSYNGSQKFTIWSSRICPDAQGALPGSVISVSPLRVACADGALEIITGQAGDGITVQGSQLAQTLGLVAGACLNRPPATSGKRRIRVLILGVNGFIGNHLTERLLDEENYEVYGMDIGSNAISRFLLHPRFHFVEGDISIHSEWIEYHVKKCDVVLPLVAIATPIEYTRNPLRVFELDFEENLRIIRYCVKYRKRVVFPSTSEVYGMCTDASFDEDKSNLIVGPVNKPRWIYSVSKQLLDRVIWAYGEKEGLRFTLFRPFNWMGPRLDSLNAARIGSSRAITQLILNLVEGTPIKLIDGGQQKRCFTDIRDGIEALFRIIVNEGDRCDGKIINIGNPDNEASIQELATLLLDSFDKHPLRCHFPPFAGFQVVESRSYYGKGYQDVAHRKPSIDNARRCLDWEPSIAMRDTVEETLDFFLRSVDIAERAS.

The formyltransferase ArnAFT stretch occupies residues M1 to L304. H104 serves as the catalytic Proton donor; for formyltransferase activity. Residues R114 and V136–D140 each bind (6R)-10-formyltetrahydrofolate. Positions R314 to S660 are dehydrogenase ArnADH. NAD(+)-binding positions include D347 and D368–I369. UDP-alpha-D-glucuronate is bound by residues A393, Y398, and T432–S433. The active-site Proton acceptor; for decarboxylase activity is E434. UDP-alpha-D-glucuronate contacts are provided by residues R460, N492, K526–R535, and Y613. R619 serves as the catalytic Proton donor; for decarboxylase activity.

This sequence in the N-terminal section; belongs to the Fmt family. UDP-L-Ara4N formyltransferase subfamily. In the C-terminal section; belongs to the NAD(P)-dependent epimerase/dehydratase family. UDP-glucuronic acid decarboxylase subfamily. As to quaternary structure, homohexamer, formed by a dimer of trimers.

It catalyses the reaction UDP-alpha-D-glucuronate + NAD(+) = UDP-beta-L-threo-pentopyranos-4-ulose + CO2 + NADH. The enzyme catalyses UDP-4-amino-4-deoxy-beta-L-arabinose + (6R)-10-formyltetrahydrofolate = UDP-4-deoxy-4-formamido-beta-L-arabinose + (6S)-5,6,7,8-tetrahydrofolate + H(+). The protein operates within nucleotide-sugar biosynthesis; UDP-4-deoxy-4-formamido-beta-L-arabinose biosynthesis; UDP-4-deoxy-4-formamido-beta-L-arabinose from UDP-alpha-D-glucuronate: step 1/3. It functions in the pathway nucleotide-sugar biosynthesis; UDP-4-deoxy-4-formamido-beta-L-arabinose biosynthesis; UDP-4-deoxy-4-formamido-beta-L-arabinose from UDP-alpha-D-glucuronate: step 3/3. Its pathway is bacterial outer membrane biogenesis; lipopolysaccharide biosynthesis. In terms of biological role, bifunctional enzyme that catalyzes the oxidative decarboxylation of UDP-glucuronic acid (UDP-GlcUA) to UDP-4-keto-arabinose (UDP-Ara4O) and the addition of a formyl group to UDP-4-amino-4-deoxy-L-arabinose (UDP-L-Ara4N) to form UDP-L-4-formamido-arabinose (UDP-L-Ara4FN). The modified arabinose is attached to lipid A and is required for resistance to polymyxin and cationic antimicrobial peptides. This chain is Bifunctional polymyxin resistance protein ArnA, found in Salmonella paratyphi A (strain ATCC 9150 / SARB42).